The following is a 493-amino-acid chain: Lysine--tRNA ligase (493 aa).

A 'HIGH' region motif is present at residues 26-34; sequence PSGHIHLGN. The 'KMSKS' region motif lies at 270–274; it reads AMKSS.

The protein belongs to the class-I aminoacyl-tRNA synthetase family.

The protein localises to the cytoplasm. The enzyme catalyses tRNA(Lys) + L-lysine + ATP = L-lysyl-tRNA(Lys) + AMP + diphosphate. The chain is Lysine--tRNA ligase (lysS) from Archaeoglobus fulgidus (strain ATCC 49558 / DSM 4304 / JCM 9628 / NBRC 100126 / VC-16).